The chain runs to 82 residues: Small ribosomal subunit protein bS16 (82 aa).

The protein belongs to the bacterial ribosomal protein bS16 family.

This is Small ribosomal subunit protein bS16 from Serratia proteamaculans (strain 568).